Consider the following 329-residue polypeptide: 4-hydroxythreonine-4-phosphate dehydrogenase (329 aa).

Residues histidine 136 and threonine 137 each contribute to the substrate site. A divalent metal cation-binding residues include histidine 166, histidine 211, and histidine 266. Lysine 274, asparagine 283, and arginine 292 together coordinate substrate.

It belongs to the PdxA family. Homodimer. The cofactor is Zn(2+). Mg(2+) is required as a cofactor. Co(2+) serves as cofactor.

The protein localises to the cytoplasm. The enzyme catalyses 4-(phosphooxy)-L-threonine + NAD(+) = 3-amino-2-oxopropyl phosphate + CO2 + NADH. It functions in the pathway cofactor biosynthesis; pyridoxine 5'-phosphate biosynthesis; pyridoxine 5'-phosphate from D-erythrose 4-phosphate: step 4/5. Functionally, catalyzes the NAD(P)-dependent oxidation of 4-(phosphooxy)-L-threonine (HTP) into 2-amino-3-oxo-4-(phosphooxy)butyric acid which spontaneously decarboxylates to form 3-amino-2-oxopropyl phosphate (AHAP). This Neisseria meningitidis serogroup B (strain ATCC BAA-335 / MC58) protein is 4-hydroxythreonine-4-phosphate dehydrogenase.